The following is a 195-amino-acid chain: SPbeta prophage-derived uncharacterized protein YotM (195 aa).

The polypeptide is SPbeta prophage-derived uncharacterized protein YotM (yotM) (Bacillus subtilis (strain 168)).